The following is a 291-amino-acid chain: Asialoglycoprotein receptor 1 (291 aa).

The segment covering 1-19 (MTKECQDLQHLDNEESDHH) has biased composition (basic and acidic residues). Positions 1–27 (MTKECQDLQHLDNEESDHHQLRKGPPP) are disordered. The Cytoplasmic portion of the chain corresponds to 1–40 (MTKECQDLQHLDNEESDHHQLRKGPPPSQPLLQRLCSGPR). The Endocytosis signal motif lies at 5 to 8 (CQDL). At Ser-16 the chain carries Phosphoserine. Cys-36 carries the S-palmitoyl cysteine lipid modification. A helical; Signal-anchor for type II membrane protein membrane pass occupies residues 41–61 (LLLLSLGLSLLLLVVVCVIGS). Positions 61 to 123 (SQNSQLQKEL…KDLSEDHSSL (63 aa)) form a coiled coil. The Extracellular segment spans residues 62–291 (QNSQLQKELR…DKASQEPPLL (230 aa)). N-linked (GlcNAc...) asparagine glycans are attached at residues Asn-79 and Asn-147. 3 disulfides stabilise this stretch: Cys-154/Cys-165, Cys-182/Cys-277, and Cys-255/Cys-269. One can recognise a C-type lectin domain in the interval 161 to 278 (HERSCYWFSR…CQRPYRWVCE (118 aa)). Residues Val-191, Glu-197, Asp-216, Gln-240, Asp-242, Asp-243, Glu-253, Asp-254, Asn-265, Asp-266, and Glu-278 each coordinate Ca(2+). Position 285 is a phosphoserine (Ser-285).

Interacts with LASS2. Post-translationally, phosphorylated on a cytoplasmic Ser residue.

The protein localises to the membrane. In terms of biological role, mediates the endocytosis of plasma glycoproteins to which the terminal sialic acid residue on their complex carbohydrate moieties has been removed. The receptor recognizes terminal galactose and N-acetylgalactosamine units. After ligand binding to the receptor, the resulting complex is internalized and transported to a sorting organelle, where receptor and ligand are disassociated. The receptor then returns to the cell membrane surface. This Pongo abelii (Sumatran orangutan) protein is Asialoglycoprotein receptor 1 (ASGR1).